A 118-amino-acid chain; its full sequence is Holo-[acyl-carrier-protein] synthase (118 aa).

Mg(2+)-binding residues include Asp-8 and Glu-58.

Belongs to the P-Pant transferase superfamily. AcpS family. Mg(2+) serves as cofactor.

Its subcellular location is the cytoplasm. It carries out the reaction apo-[ACP] + CoA = holo-[ACP] + adenosine 3',5'-bisphosphate + H(+). In terms of biological role, transfers the 4'-phosphopantetheine moiety from coenzyme A to a Ser of acyl-carrier-protein. The sequence is that of Holo-[acyl-carrier-protein] synthase from Listeria monocytogenes serotype 4a (strain HCC23).